A 541-amino-acid chain; its full sequence is Atlastin-3 (541 aa).

The disordered stretch occupies residues 1–22 (MLSPQRTAAVASRGAGDAMENG). Positions 1–25 (MLSPQRTAAVASRGAGDAMENGKPG) are N-terminal hypervariable region (HVR). Over 1–445 (MLSPQRTAAV…NVFSTFRTPA (445 aa)) the chain is Cytoplasmic. The GB1/RHD3-type G domain maps to 57–306 (DLDVVVVSVA…LIPYVLNPSK (250 aa)). GDP-binding residues include Arg-70, Lys-71, Gly-72, Lys-73, Ser-74, Phe-75, and Arg-109. Asp-142 is a binding site for Mg(2+). Residues Arg-213, Asp-214, Val-272, and Ser-275 each contribute to the GDP site. Positions 344–434 (MLQATAANNL…YENFCKHNGS (91 aa)) are 3HB (three-helix bundle) domain. The residue at position 391 (Lys-391) is an N6-acetyllysine. A helical membrane pass occupies residues 446–466 (VLFTGIAVLYIASGLTGFIGL). Residue Glu-467 is a topological domain, lumenal. Residues 468-488 (VVAQLFNCMVGLLLIALLTWG) form a helical membrane-spanning segment. Residues 489-541 (YIRYSGQYLELGGAIDSGAAYVLEQASSHIGNSTQAAVRDAIAGRPPADKKSQ) are Cytoplasmic-facing.

Belongs to the TRAFAC class dynamin-like GTPase superfamily. GB1/RHD3 GTPase family. GB1 subfamily. In terms of assembly, monomeric and homodimeric. The homodimer, transiently formed by two molecules on opposing membranes, is the active form mediating ER membrane fusion. Interacts with ZFYVE27; both proteins are involved in endoplasmic reticulum tubular network organization. Interacts with REEP5; both proteins are involved in endoplasmic reticulum tubular network organization.

The protein resides in the endoplasmic reticulum membrane. It catalyses the reaction GTP + H2O = GDP + phosphate + H(+). Atlastin-3 (ATL3) is a membrane-anchored GTPase that mediates the GTP-dependent fusion of endoplasmic reticulum (ER) membranes, maintaining the continuous ER network. It facilitates the formation of three-way junctions where ER tubules intersect. Two atlastin-3 on neighboring ER tubules bind GTP and form loose homodimers through the GB1/RHD3-type G domains and 3HB regions. Upon GTP hydrolysis, the 3HB regions tighten, pulling the membranes together to drive their fusion. After fusion, the homodimer disassembles upon release of inorganic phosphate (Pi). Subsequently, GDP dissociates, resetting the monomers to a conformation ready for a new fusion cycle. The sequence is that of Atlastin-3 from Rattus norvegicus (Rat).